The sequence spans 41 residues: Large ribosomal subunit protein bL36 (41 aa).

Belongs to the bacterial ribosomal protein bL36 family.

The polypeptide is Large ribosomal subunit protein bL36 (Sphingopyxis alaskensis (strain DSM 13593 / LMG 18877 / RB2256) (Sphingomonas alaskensis)).